The primary structure comprises 1106 residues: DNA polymerase delta catalytic subunit (1106 aa).

Positions 1 to 28 are disordered; it reads MDGKRRPGPGPGVPPKRARGGLWDEDEA. A Nuclear localization signal motif is present at residues 4–19; the sequence is KRRPGPGPGVPPKRAR. Arg-19 carries the post-translational modification Omega-N-methylarginine. Residue Lys-573 forms a Glycyl lysine isopeptide (Lys-Gly) (interchain with G-Cter in SUMO2) linkage. Cys-1011, Cys-1014, Cys-1025, and Cys-1028 together coordinate Zn(2+). The CysA-type zinc-finger motif lies at 1011-1028; that stretch reads CIGCRTVLSHQGAVCKFC. Residues Cys-1057, Cys-1060, Cys-1070, and Cys-1075 each contribute to the [4Fe-4S] cluster site. Positions 1057–1075 match the CysB motif motif; sequence CQRCQGSLHEDVICTSRDC.

Belongs to the DNA polymerase type-B family. In terms of assembly, component of the tetrameric DNA polymerase delta complex (Pol-delta4), which consists of POLD1/p125, POLD2/p50, POLD3/p66/p68 and POLD4/p12, with POLD1 bearing both DNA polymerase and 3' to 5' proofreading exonuclease activities. Within Pol-delta4, directly interacts with POLD2 and POLD4. Following genotoxic stress by DNA-damaging agents, such as ultraviolet light and methyl methanesulfonate, or by replication stress induced by treatment with hydroxyurea or aphidicolin, Pol-delta4 is converted into a trimeric form of the complex (Pol-delta3) by POLD4 degradation. Pol-delta3 is the major form at S phase replication sites and DNA damage sites. POLD1 displays different catalytic properties depending upon the complex it is found in. It exhibits higher proofreading activity and fidelity than Pol-delta4, making it particularly well suited to respond to DNA damage. Directly interacts with PCNA, as do POLD3 and POLD4; this interaction stimulates Pol-delta4 polymerase activity. As POLD2 and POLD4, directly interacts with WRNIP1; this interaction stimulates DNA polymerase delta-mediated DNA synthesis, independently of the presence of PCNA. This stimulation may be due predominantly to an increase of initiation frequency and also to increased processivity. Also observed as a dimeric complex with POLD2 (Pol-delta2). Pol-delta2 is relatively insensitive to the PCNA stimulation (2-5-fold) compared to Pol-delta4 that is stimulated by over 50-fold. Interacts with POLDIP2; this interaction is indirect and most probably mediated through POLD2-binding. Interacts with CIAO1. Interacts with POLDIP2. Interacts with RFC1. Requires [4Fe-4S] cluster as cofactor.

The protein resides in the nucleus. It catalyses the reaction DNA(n) + a 2'-deoxyribonucleoside 5'-triphosphate = DNA(n+1) + diphosphate. With respect to regulation, regulated by alteration of quaternary structure. Exhibits burst rates of DNA synthesis are about 5 times faster in the presence of POLD4 (Pol-delta4 complex) than in its absence (Pol-delta3 complex), while the affinity of the enzyme for its DNA and dNTP substrates appears unchanged. The Pol-delta3 complex is more likely to proofread DNA synthesis because it cleaves single-stranded DNA twice as fast and transfers mismatched DNA from the polymerase to the exonuclease sites 9 times faster compared to the Pol-delta3 complex. Pol-delta3 also extends mismatched primers 3 times more slowly in the absence of POLD4. The conversion of Pol-delta4 into Pol-delta3 is induced by genotoxic stress or by replication stress leading POLD4 degradation. Stimulated in the presence of PCNA. This stimulation is further increased in the presence of KCTD13/PDIP1, most probably via direct interaction between KCTD13 and POLD2. In terms of biological role, as the catalytic component of the trimeric (Pol-delta3 complex) and tetrameric DNA polymerase delta complexes (Pol-delta4 complex), plays a crucial role in high fidelity genome replication, including in lagging strand synthesis, and repair. Exhibits both DNA polymerase and 3'- to 5'-exonuclease activities. Requires the presence of accessory proteins POLD2, POLD3 and POLD4 for full activity. Depending upon the absence (Pol-delta3) or the presence of POLD4 (Pol-delta4), displays differences in catalytic activity. Most notably, expresses higher proofreading activity in the context of Pol-delta3 compared with that of Pol-delta4. Although both Pol-delta3 and Pol-delta4 process Okazaki fragments in vitro, Pol-delta3 may be better suited to fulfill this task, exhibiting near-absence of strand displacement activity compared to Pol-delta4 and stalling on encounter with the 5'-blocking oligonucleotides. Pol-delta3 idling process may avoid the formation of a gap, while maintaining a nick that can be readily ligated. Along with DNA polymerase kappa, DNA polymerase delta carries out approximately half of nucleotide excision repair (NER) synthesis following UV irradiation. Under conditions of DNA replication stress, in the presence of POLD3 and POLD4, may catalyze the repair of broken replication forks through break-induced replication (BIR). Involved in the translesion synthesis (TLS) of templates carrying O6-methylguanine, 8oxoG or abasic sites. The polypeptide is DNA polymerase delta catalytic subunit (POLD1) (Bos taurus (Bovine)).